Here is a 474-residue protein sequence, read N- to C-terminus: tRNA-2-methylthio-N(6)-dimethylallyladenosine synthase (474 aa).

One can recognise an MTTase N-terminal domain in the interval 3–120 (KKLHIKTWGC…LPEMINSVRG (118 aa)). The [4Fe-4S] cluster site is built by cysteine 12, cysteine 49, cysteine 83, cysteine 157, cysteine 161, and cysteine 164. One can recognise a Radical SAM core domain in the interval 143 to 375 (RAEGPTAFVS…QERINQQAMA (233 aa)). In terms of domain architecture, TRAM spans 378-441 (RRMLGTTQRI…PNSLRGKVVR (64 aa)).

It belongs to the methylthiotransferase family. MiaB subfamily. As to quaternary structure, monomer. Requires [4Fe-4S] cluster as cofactor.

Its subcellular location is the cytoplasm. It catalyses the reaction N(6)-dimethylallyladenosine(37) in tRNA + (sulfur carrier)-SH + AH2 + 2 S-adenosyl-L-methionine = 2-methylsulfanyl-N(6)-dimethylallyladenosine(37) in tRNA + (sulfur carrier)-H + 5'-deoxyadenosine + L-methionine + A + S-adenosyl-L-homocysteine + 2 H(+). The catalysed reaction is N(6)-dimethylallyladenosine(37) in tRNA + (sulfur carrier)-SH + AH2 + S-adenosyl-L-methionine = 2-thio-N(6)-dimethylallyladenosine(37) in tRNA + (sulfur carrier)-H + 5'-deoxyadenosine + L-methionine + A + H(+). The enzyme catalyses 2-thio-N(6)-dimethylallyladenosine(37) in tRNA + S-adenosyl-L-methionine = 2-methylsulfanyl-N(6)-dimethylallyladenosine(37) in tRNA + S-adenosyl-L-homocysteine + H(+). Functionally, catalyzes the methylthiolation of N6-(dimethylallyl)adenosine (i(6)A), leading to the formation of 2-methylthio-N6-(dimethylallyl)adenosine (ms(2)i(6)A) at position 37 in tRNAs that read codons beginning with uridine. This chain is tRNA-2-methylthio-N(6)-dimethylallyladenosine synthase, found in Salmonella typhimurium (strain LT2 / SGSC1412 / ATCC 700720).